The primary structure comprises 93 residues: NADH-dependent phenylglyoxylate dehydrogenase subunit delta (93 aa).

4Fe-4S ferredoxin-type domains lie at 39 to 68 (MRPV…EHAA) and 66 to 93 (HAAW…RRSR).

As to quaternary structure, dimer of heteropentamers composed of an alpha (PadG), a beta (PadI), a gamma (PadE), a delta (PadF) and an epsilon (PadH) subunit. It depends on [4Fe-4S] cluster as a cofactor.

It carries out the reaction phenylglyoxylate + NAD(+) + CoA = benzoyl-CoA + CO2 + NADH. Its activity is regulated as follows. Activated by magnesium ions and thiamine diphosphate. In terms of biological role, involved in the anaerobic metabolism of phenylalanine and phenylacetate. Catalyzes the oxidative decarboxylation of phenylglyoxylate to benzoyl-CoA and CO(2). It can also react slowly with 2-oxo-3-methylbutanoate and use different electron acceptors such as benzyl viologen, methyl viologen, FAD or FMN, but NAD seems to be the physiological electron acceptor. Also catalyzes an isotope exchange between CO(2) and the carboxyl group which proves partial or complete reversibility of the oxidative decarboxylation reaction. The sequence is that of NADH-dependent phenylglyoxylate dehydrogenase subunit delta (padF) from Aromatoleum evansii (Azoarcus evansii).